We begin with the raw amino-acid sequence, 266 residues long: Carboxy-S-adenosyl-L-methionine synthase (266 aa).

A disordered region spans residues 1 to 24 (MPKRETQSLHDTQQQPGPTAPQRD). Residues Tyr58, 83–85 (GCS), 108–109 (DN), 136–137 (DI), Asn151, and Arg218 each bind S-adenosyl-L-methionine.

Belongs to the class I-like SAM-binding methyltransferase superfamily. Cx-SAM synthase family. Homodimer.

It catalyses the reaction prephenate + S-adenosyl-L-methionine = carboxy-S-adenosyl-L-methionine + 3-phenylpyruvate + H2O. Functionally, catalyzes the conversion of S-adenosyl-L-methionine (SAM) to carboxy-S-adenosyl-L-methionine (Cx-SAM). This Yersinia enterocolitica serotype O:8 / biotype 1B (strain NCTC 13174 / 8081) protein is Carboxy-S-adenosyl-L-methionine synthase.